Here is a 726-residue protein sequence, read N- to C-terminus: Myb-like protein Z (726 aa).

Disordered regions lie at residues 15–109 (DSND…SLSN), 124–149 (ASPS…YHPY), 161–239 (HYVS…TKQQ), and 272–303 (LIPS…NMRS). Residues 18–39 (DNNNNNNNNNNSNNNNNNNNNN) show a composition bias toward low complexity. The span at 45–80 (SSATSSPTGQDSTIDRPNSPSSSIKFTYPSKNSIVT) shows a compositional bias: polar residues. Residues 81–108 (SPSSLQLPSPSFSSSSSSSSSSSSSSLS) show a composition bias toward low complexity. Polar residues predominate over residues 124-147 (ASPSKSSENSPTIHTSSLSPNSYH). Residues 165–177 (NNNNNNNNNNNNN) show a composition bias toward low complexity. A compositionally biased stretch (polar residues) spans 183–209 (SSELYNTSPSISSKTTPNGSSTNNSPF). Positions 221–239 (NNNNNNNNDRNENNTTKQQ) are enriched in low complexity. The Myb-like domain occupies 329–388 (IPIATRKLWSQEECCRLLEMVFQRDPQSVTSKESELRWRSIASTLGRTVTSTRKKYMRLM). Residues 516-651 (KQIQQQQKQK…NNNYRSSLSP (136 aa)) show a composition bias toward low complexity. The tract at residues 516–726 (KQIQQQQKQK…NNNNYNNYHN (211 aa)) is disordered. A compositionally biased stretch (polar residues) spans 661–675 (QSPQQKSNNENQQNF). Low complexity predominate over residues 709-726 (NLNNNNNNNNNNYNNYHN).

The chain is Myb-like protein Z (mybZ) from Dictyostelium discoideum (Social amoeba).